Reading from the N-terminus, the 353-residue chain is MEDGVLKEGFLVKRGHIVHNWKARWFILRQNTLVYYKLEGGRRVTPPKGRILLDGCTITCPCLEYENRPLLIKLKTQTSTEYFLEACSREERDAWAFEITGAIHAGQPGKVQQLHSLRNSFKLPPHISLHRIVDKMHDSNTGIRSSPNMEQGSTYKKTFLGSSLVDWLISNSFTASRLEAVTLASMLMEENFLRPVGVRSMGAIRSGDLAEQFLDDSTALYTFAESYKKKISPKEEISLSTVELSGTVVKQGYLAKQGHKRKNWKVRRFVLRKDPAFLHYYDPSKEENRPVGGFSLRGSLVSALEDNGVPTGVKGNVQGNLFKVITKDDTHYYIQASSKAERAEWIEAIKKLT.

Position 1 is an N-acetylmethionine (Met1). The 101-residue stretch at 4 to 104 (GVLKEGFLVK…WAFEITGAIH (101 aa)) folds into the PH 1 domain. Ser120 is subject to Phosphoserine. Positions 139-225 (SNTGIRSSPN…DSTALYTFAE (87 aa)) constitute a DEP domain. One can recognise a PH 2 domain in the interval 247–353 (TVVKQGYLAK…EWIEAIKKLT (107 aa)).

The protein localises to the cell projection. It localises to the lamellipodium membrane. The protein resides in the cytoplasm. It is found in the cytoskeleton. Functionally, may help orchestrate cytoskeletal arrangement. Contribute to lamellipodia formation. The polypeptide is Pleckstrin-2 (PLEK2) (Homo sapiens (Human)).